Reading from the N-terminus, the 87-residue chain is Putative membrane protein insertion efficiency factor (87 aa).

The protein belongs to the UPF0161 family.

It localises to the cell membrane. Could be involved in insertion of integral membrane proteins into the membrane. The polypeptide is Putative membrane protein insertion efficiency factor (Streptococcus pyogenes serotype M12 (strain MGAS2096)).